The following is a 333-amino-acid chain: Phosphate acyltransferase (333 aa).

It belongs to the PlsX family. As to quaternary structure, homodimer. Probably interacts with PlsY.

It localises to the cytoplasm. The catalysed reaction is a fatty acyl-[ACP] + phosphate = an acyl phosphate + holo-[ACP]. It functions in the pathway lipid metabolism; phospholipid metabolism. In terms of biological role, catalyzes the reversible formation of acyl-phosphate (acyl-PO(4)) from acyl-[acyl-carrier-protein] (acyl-ACP). This enzyme utilizes acyl-ACP as fatty acyl donor, but not acyl-CoA. This Bacillus subtilis (strain 168) protein is Phosphate acyltransferase.